Here is a 164-residue protein sequence, read N- to C-terminus: Phosphopantetheine adenylyltransferase (164 aa).

Residue Ser9 participates in substrate binding. Residues Ser9 to Phe10 and His17 contribute to the ATP site. Positions 41, 78, and 92 each coordinate substrate. ATP contacts are provided by residues Gly93–Arg95, Glu103, and Ser128–Thr134.

This sequence belongs to the bacterial CoaD family. Homohexamer. It depends on Mg(2+) as a cofactor.

Its subcellular location is the cytoplasm. It catalyses the reaction (R)-4'-phosphopantetheine + ATP + H(+) = 3'-dephospho-CoA + diphosphate. The protein operates within cofactor biosynthesis; coenzyme A biosynthesis; CoA from (R)-pantothenate: step 4/5. Reversibly transfers an adenylyl group from ATP to 4'-phosphopantetheine, yielding dephospho-CoA (dPCoA) and pyrophosphate. In Allorhizobium ampelinum (strain ATCC BAA-846 / DSM 112012 / S4) (Agrobacterium vitis (strain S4)), this protein is Phosphopantetheine adenylyltransferase.